Reading from the N-terminus, the 302-residue chain is Deoxyhypusine hydroxylase (302 aa).

Methionine 1 is subject to N-acetylmethionine. HEAT-like PBS-type repeat units follow at residues 54–80 (LKHE…VLQD), 87–113 (VRHE…YSSD), 174–200 (ERYR…GLHC), 205–231 (FRHE…ALAR), and 238–264 (VRHE…HADD). 3 residues coordinate Fe cation: histidine 56, histidine 89, and glutamate 90. Positions 207, 240, and 241 each coordinate Fe cation.

It belongs to the deoxyhypusine hydroxylase family. It depends on Fe(2+) as a cofactor.

It catalyses the reaction [eIF5A protein]-deoxyhypusine + AH2 + O2 = [eIF5A protein]-hypusine + A + H2O. Its pathway is protein modification; eIF5A hypusination. In terms of biological role, catalyzes the hydroxylation of the N(6)-(4-aminobutyl)-L-lysine intermediate produced by deoxyhypusine synthase/DHPS on a critical lysine of the eukaryotic translation initiation factor 5A/eIF-5A. This is the second step of the post-translational modification of that lysine into an unusual amino acid residue named hypusine. Hypusination is unique to mature eIF-5A factor and is essential for its function. This is Deoxyhypusine hydroxylase from Homo sapiens (Human).